The primary structure comprises 239 residues: Ribonuclease PH (239 aa).

Phosphate contacts are provided by residues R86 and 124–126 (GTR).

Belongs to the RNase PH family. As to quaternary structure, homohexameric ring arranged as a trimer of dimers.

The catalysed reaction is tRNA(n+1) + phosphate = tRNA(n) + a ribonucleoside 5'-diphosphate. Functionally, phosphorolytic 3'-5' exoribonuclease that plays an important role in tRNA 3'-end maturation. Removes nucleotide residues following the 3'-CCA terminus of tRNAs; can also add nucleotides to the ends of RNA molecules by using nucleoside diphosphates as substrates, but this may not be physiologically important. Probably plays a role in initiation of 16S rRNA degradation (leading to ribosome degradation) during starvation. The sequence is that of Ribonuclease PH from Rhizobium etli (strain CIAT 652).